Reading from the N-terminus, the 1210-residue chain is Adenine-specific methyltransferase PglX (1210 aa).

The span at 1181-1194 shows a compositional bias: basic and acidic residues; sequence KQGEHGLTDDDLRG. The interval 1181–1210 is disordered; the sequence is KQGEHGLTDDDLRGWRPPAATRRRRAAAKQ. Basic residues predominate over residues 1201–1210; that stretch reads TRRRRAAAKQ.

This sequence belongs to the methyltransferase superfamily. PglX adenine methyltransferase family.

It catalyses the reaction a 2'-deoxyadenosine in DNA + S-adenosyl-L-methionine = an N(6)-methyl-2'-deoxyadenosine in DNA + S-adenosyl-L-homocysteine + H(+). Its function is as follows. BREX systems (bacteriophage exclusion) provide immunity against bacteriophage. Part of a type 2 BREX system. Probably a DNA methyltransferase, it methylates phage DNA in vitro in an S-adenosyl-L-methionine-dependent manner. Previously called the phage growth limitation (Pgl) system, it confers protection against bacteriophage phiC31. The bacteria allows one cycle of phage infection, but subsequent cycles are impaired, protecting the original bacterial colony. The system undergoes high rates (10(-3) to 10(-4)) of phase reversion, i.e. loss and regain of phiC31 resistance. When the pglW-pglX-pglY-pglZ genes are transformed into a susceptible S.lividans (strain 1326) they confer resistance to infection by phage phiC31 and phiBT1; all 4 genes are necessary. Probably a toxic component of a type II toxin-antitoxin (TA) system. The toxic activity is inhibited by its cognate antitoxin PglZ. Functionally, may be a subtypes G and alpha restriction enzyme that recognizes and cleaves an unknown sequence. Methylates an adenine residue in the same sequence. In Streptomyces coelicolor (strain ATCC BAA-471 / A3(2) / M145), this protein is Adenine-specific methyltransferase PglX.